The chain runs to 155 residues: Cyanate hydratase (155 aa).

Active-site residues include arginine 95, glutamate 98, and serine 121.

Belongs to the cyanase family.

The enzyme catalyses cyanate + hydrogencarbonate + 3 H(+) = NH4(+) + 2 CO2. Its function is as follows. Catalyzes the reaction of cyanate with bicarbonate to produce ammonia and carbon dioxide. The chain is Cyanate hydratase from Pseudomonas syringae pv. tomato (strain ATCC BAA-871 / DC3000).